The sequence spans 135 residues: Ribonuclease P protein component 2 (135 aa).

It belongs to the eukaryotic/archaeal RNase P protein component 2 family. In terms of assembly, consists of a catalytic RNA component and at least 4-5 protein subunits.

The protein localises to the cytoplasm. The catalysed reaction is Endonucleolytic cleavage of RNA, removing 5'-extranucleotides from tRNA precursor.. Its function is as follows. Part of ribonuclease P, a protein complex that generates mature tRNA molecules by cleaving their 5'-ends. The polypeptide is Ribonuclease P protein component 2 (Methanosarcina barkeri (strain Fusaro / DSM 804)).